Consider the following 1193-residue polypeptide: MTGQLVQYGRHRQRRSYARISEVLELPNLIEIQTSSYQWFLDEGLREMFQDISPIEDFTGNLSLEFIDYSLGDPKYPVAESKERDVTYSAPLRVKVRLINKETGEVKDQDVFMGDFPIMTDTGTFIINGAERVIVSQLVRSPSVYFSGKVDKNGKKGFTATVIPNRGAWLEYETDAKDVVYVRIDRTRKLPVTVLLRALGFSSDQEILDLIGENEYLRNTLEKDNTENADKALLEIYERLRPGEPPTVENAKSLLDSRFFDPKRYDLANVGRYKINKKLHIKNRLFNQKLAETLVDPETGEILAEKGQILDRRVLDKVLPYLENGIGFRKLYPNGGVVEDEVELQSIKIYAPSDQEGEQVINVIGNAYVEEAVKNITPSDIIASISYFFNLLHGVGDTDDIDHLGNRRLRSVGELLQNQFRIGLSRMERVVRERMSIQDTNTITPQQLINIRPVIASIKEFFGSSQLSQFMDQTNPLAELTHKRRLSALGPGGLTRERAGMEVRDVHYSHYGRMCPIETPEGPNIGLINSLSSFAKVNRFGFIETPYRRVDPETGKVTPRIDYLTADEEDNYVVAQANALLADDGSFIDDNIIARFRGENTVVPRNRVDYMDVSPKQVVSAATACIPFLENDDSNRALMGANMQRQAVPLMQPESPIVGTGMEYVSGKDSGAAVICRYPGVVERVEAKNIWVRRYEDVDGQQVKGNLDKYSLLKFVRSNQGTCYNQRPIVSVGDEVVKGEILADGPSMEKGELALGRNVMVGFMTWDGYNYEDAIIMSERLVKDDVYTSIHIEEYESEARDTKLGPEEITRDIPNVGEDALRNLDERGIIRIGAEVKDGDLLVGKVTPKGVTELTAEERLLHAIFGEKAREVRDTSLRVPHGGGGIIHDVKVFNREDGDELPPGVNQLVRVYIVQKRKISEGDKMAGRHGNKGVISKILPEEDMPYLPDGTPIDIMLNPLGVPSRMNIGQVLELHMGMAARYLGIHIASPVFDGAREEDVWETLEEAGMSRDAKTVLYDGRTGEPFDNRVSVGIMYMIKLAHMVDDKLHARSTGPYSLVTQQPLGGKAQFGGQRFGEMEVWALEAYGAAYTLQEILTVKSDDVVGRVKTYEAIVKGDNVPEPGVPESFKVLIKELQSLGMDVKILSGDEEEIEMRDLEDDEETKKADGLALSNDEDAADLAPVDLERDAVTKE.

Positions 1152–1161 are enriched in acidic residues; it reads IEMRDLEDDE. The tract at residues 1152-1193 is disordered; the sequence is IEMRDLEDDEETKKADGLALSNDEDAADLAPVDLERDAVTKE. Residues 1184–1193 show a composition bias toward basic and acidic residues; sequence DLERDAVTKE.

This sequence belongs to the RNA polymerase beta chain family. The RNAP catalytic core consists of 2 alpha, 1 beta, 1 beta' and 1 omega subunit. When a sigma factor is associated with the core the holoenzyme is formed, which can initiate transcription.

It catalyses the reaction RNA(n) + a ribonucleoside 5'-triphosphate = RNA(n+1) + diphosphate. Its function is as follows. DNA-dependent RNA polymerase catalyzes the transcription of DNA into RNA using the four ribonucleoside triphosphates as substrates. This is DNA-directed RNA polymerase subunit beta from Bacillus pumilus (strain SAFR-032).